Consider the following 446-residue polypeptide: tRNA modification GTPase MnmE (446 aa).

3 residues coordinate (6S)-5-formyl-5,6,7,8-tetrahydrofolate: Arg-21, Glu-77, and Lys-116. A TrmE-type G domain is found at 212–370; the sequence is GFRIALIGAP…LRAALASHVA (159 aa). Asn-222 is a K(+) binding site. GTP contacts are provided by residues 222-227, 241-247, and 266-269; these read NAGKST, TDVAGTT, and DTAG. Ser-226 is a binding site for Mg(2+). K(+)-binding residues include Thr-241, Val-243, and Thr-246. Thr-247 contributes to the Mg(2+) binding site. Residue Lys-446 participates in (6S)-5-formyl-5,6,7,8-tetrahydrofolate binding.

The protein belongs to the TRAFAC class TrmE-Era-EngA-EngB-Septin-like GTPase superfamily. TrmE GTPase family. Homodimer. Heterotetramer of two MnmE and two MnmG subunits. Requires K(+) as cofactor.

The protein resides in the cytoplasm. In terms of biological role, exhibits a very high intrinsic GTPase hydrolysis rate. Involved in the addition of a carboxymethylaminomethyl (cmnm) group at the wobble position (U34) of certain tRNAs, forming tRNA-cmnm(5)s(2)U34. This chain is tRNA modification GTPase MnmE, found in Caulobacter vibrioides (strain ATCC 19089 / CIP 103742 / CB 15) (Caulobacter crescentus).